The sequence spans 397 residues: ATP-dependent RNA helicase eIF4A (397 aa).

Positions 24 to 52 (DSFDDMNLKSELLRGIYAYGFERPSAIQQ) match the Q motif motif. One can recognise a Helicase ATP-binding domain in the interval 55 to 225 (IMPVIKGHDV…TKFMRDPVRI (171 aa)). 68 to 75 (AQSGTGKT) serves as a coordination point for ATP. The DEAD box motif lies at 173–176 (DEAD). The Helicase C-terminal domain occupies 236–397 (GIKQFYIAVE…EMPMNVADLI (162 aa)).

The protein belongs to the DEAD box helicase family. eIF4A subfamily. As to quaternary structure, component of the eIF4F complex, which composition varies with external and internal environmental conditions. It is composed of at least eIF4A, eIF4E and eIF4G.

Its subcellular location is the cytoplasm. It carries out the reaction ATP + H2O = ADP + phosphate + H(+). Its function is as follows. ATP-dependent RNA helicase which is a subunit of the eIF4F complex involved in cap recognition and is required for mRNA binding to ribosome. In the current model of translation initiation, eIF4A unwinds RNA secondary structures in the 5'-UTR of mRNAs which is necessary to allow efficient binding of the small ribosomal subunit, and subsequent scanning for the initiator codon. This chain is ATP-dependent RNA helicase eIF4A (TIF1), found in Chaetomium globosum (strain ATCC 6205 / CBS 148.51 / DSM 1962 / NBRC 6347 / NRRL 1970) (Soil fungus).